The following is a 461-amino-acid chain: O-methyltransferase CTB2 (461 aa).

Asp-288 contacts S-adenosyl-L-methionine. Residue His-339 is the Proton acceptor of the active site.

It belongs to the class I-like SAM-binding methyltransferase superfamily. Cation-independent O-methyltransferase family. COMT subfamily.

The protein operates within mycotoxin biosynthesis. In terms of biological role, O-methyltransferase; part of the gene cluster that mediates the biosynthesis of cercosporin, a light-activated, non-host-selective toxin. The perylenequinone chromophore of cercosporin absorbs light energy to attain an electronically-activated triplet state and produces active oxygen species such as the hydroxyl radical, superoxide, hydrogen peroxide or singlet oxygen upon reaction with oxygen molecules. These reactive oxygen species cause damage to various cellular components including lipids, proteins and nucleic acids. The first step of cercosporin biosynthesis is performed by the polyketide synthase CTB1 which catalyzes the formation of nor-toralactone. The starter unit acyltransferase (SAT) domain of CTB1 initiates polyketide extension by the selective utilization of acetyl-CoA, which is elongated to the heptaketide in the beta-ketoacyl synthase (KS) domain by successive condensations with six malonyl units introduced by the malonyl acyltransferase (MAT) domain. The product template (PT) domain catalyzes C4-C9 and C2-C11 aldol cyclizations and dehydrations to a trihydroxynaphthalene, which is thought to be delivered to the thioesterase (TE) domain for product release. The bifunctional enzyme CTB3 then methylates nor-toralactone to toralactone before conducting an unusual oxidative aromatic ring opening. The O-methyltransferase CTB2 further methylates the nascent OH-6 of the CBT3 product, blocking further oxidation at this site before the reductase CTB6 reduces the 2-oxopropyl ketone at position C7, giving naphthalene. The FAD-dependent monooxygenase CTB5 in concert with the multicopper oxidase CTB12 are responsible for homodimerization of naphthalene with CTB7 installing the dioxepine moiety, finally producing cercosporin. The fasciclin domain-containing protein CTB11 might act with CTB5 and CTB12 whereas the roles of CTB9 and CTB10 have still to be elucidated. The polypeptide is O-methyltransferase CTB2 (Cercospora nicotianae (Barn spot disease fungus)).